The following is a 1293-amino-acid chain: Late blight resistance protein R1-A (1293 aa).

2 coiled-coil regions span residues 423-446 (RYSD…ESLQ) and 538-560 (PRMN…KLLN). One can recognise an NB-ARC domain in the interval 539–826 (RMNEEIVGFE…SEAFIKSSEG (288 aa)). 572–579 (GMPGLGKT) is a binding site for ATP. LRR repeat units lie at residues 876–899 (AEEN…VYSH), 956–981 (FKFL…VYLK), 1027–1049 (MVKL…LLEN), 1056–1079 (LETL…KTPN), 1102–1125 (PIRL…ISAP), 1149–1172 (LKHL…KVSN), 1175–1197 (FPQL…ADDA), 1198–1222 (FPNL…FMDI), and 1235–1259 (ESVV…NFKL).

This sequence belongs to the disease resistance NB-LRR family.

The protein localises to the cytoplasm. It is found in the membrane. Functionally, confers resistance to late blight (Phytophthora infestans) races carrying the avirulence gene Avr1. Resistance proteins guard the plant against pathogens that contain an appropriate avirulence protein via an indirect interaction with this avirulence protein. That triggers a defense system including the hypersensitive response, which restricts the pathogen growth. The protein is Late blight resistance protein R1-A (R1A) of Solanum demissum (Wild potato).